The sequence spans 124 residues: Large ribosomal subunit protein bL12 (124 aa).

Belongs to the bacterial ribosomal protein bL12 family. As to quaternary structure, homodimer. Part of the ribosomal stalk of the 50S ribosomal subunit. Forms a multimeric L10(L12)X complex, where L10 forms an elongated spine to which 2 to 4 L12 dimers bind in a sequential fashion. Binds GTP-bound translation factors.

In terms of biological role, forms part of the ribosomal stalk which helps the ribosome interact with GTP-bound translation factors. Is thus essential for accurate translation. This Anaeromyxobacter dehalogenans (strain 2CP-C) protein is Large ribosomal subunit protein bL12.